Reading from the N-terminus, the 125-residue chain is Large ribosomal subunit protein bL17 (125 aa).

It belongs to the bacterial ribosomal protein bL17 family. Part of the 50S ribosomal subunit. Contacts protein L32.

The protein is Large ribosomal subunit protein bL17 of Syntrophus aciditrophicus (strain SB).